The chain runs to 170 residues: mRNA 3'-end-processing protein yth1 (170 aa).

4 consecutive C3H1-type zinc fingers follow at residues 48 to 75, 76 to 104, 105 to 130, and 131 to 157; these read KMGSVVCKHWLRGLCKKGEQCDFLHEYN, LKKMPPCHFYAERGWCSNGEECLYLHLDP, SKQVGVCAWYNMGFCPLGPICRGKHV, and RKPRPCPKYLAGFCPLGPNCPDAHPKH.

This sequence belongs to the CPSF4/YTH1 family.

The protein localises to the nucleus. In terms of biological role, component of the cleavage factor I (CF I) involved in pre-mRNA 3'-end processing. The sequence is that of mRNA 3'-end-processing protein yth1 (yth1) from Schizosaccharomyces pombe (strain 972 / ATCC 24843) (Fission yeast).